We begin with the raw amino-acid sequence, 160 residues long: Cyclic pyranopterin monophosphate synthase (160 aa).

Substrate contacts are provided by residues 75 to 77 and 113 to 114; these read LCH and ME. D128 is a catalytic residue.

Belongs to the MoaC family. As to quaternary structure, homohexamer; trimer of dimers.

The enzyme catalyses (8S)-3',8-cyclo-7,8-dihydroguanosine 5'-triphosphate = cyclic pyranopterin phosphate + diphosphate. It participates in cofactor biosynthesis; molybdopterin biosynthesis. In terms of biological role, catalyzes the conversion of (8S)-3',8-cyclo-7,8-dihydroguanosine 5'-triphosphate to cyclic pyranopterin monophosphate (cPMP). This is Cyclic pyranopterin monophosphate synthase from Beijerinckia indica subsp. indica (strain ATCC 9039 / DSM 1715 / NCIMB 8712).